Here is a 272-residue protein sequence, read N- to C-terminus: Shikimate dehydrogenase (NADP(+)) (272 aa).

Shikimate contacts are provided by residues 14–16 (SKS) and T61. K65 (proton acceptor) is an active-site residue. Residue E77 participates in NADP(+) binding. 2 residues coordinate shikimate: N86 and D102. Residues 126 to 130 (GAGGA), 149 to 154 (NRTVSR), and M213 each bind NADP(+). Y215 contacts shikimate. Residue G237 coordinates NADP(+).

The protein belongs to the shikimate dehydrogenase family. As to quaternary structure, homodimer.

The enzyme catalyses shikimate + NADP(+) = 3-dehydroshikimate + NADPH + H(+). Its pathway is metabolic intermediate biosynthesis; chorismate biosynthesis; chorismate from D-erythrose 4-phosphate and phosphoenolpyruvate: step 4/7. Its function is as follows. Involved in the biosynthesis of the chorismate, which leads to the biosynthesis of aromatic amino acids. Catalyzes the reversible NADPH linked reduction of 3-dehydroshikimate (DHSA) to yield shikimate (SA). The polypeptide is Shikimate dehydrogenase (NADP(+)) (Shigella flexneri serotype 5b (strain 8401)).